A 352-amino-acid polypeptide reads, in one-letter code: Blue-sensitive opsin (352 aa).

The Extracellular portion of the chain corresponds to 1–42 (MRGNRLVEFPDDFWIPIPLDTNNVTALSPFLVPQDHLGSPTI). The N-linked (GlcNAc...) asparagine glycan is linked to N23. A helical transmembrane segment spans residues 43–67 (FYSMSALMFVLFVAGTAINLLTIAC). The Cytoplasmic segment spans residues 68–79 (TLQYKKLRSHLN). A helical membrane pass occupies residues 80 to 105 (YILVNMAVANLIVASTGSSTCFVCFA). At 106 to 119 (FKYMVLGPLGCKIE) the chain is on the extracellular side. C116 and C193 are disulfide-bonded. A helical membrane pass occupies residues 120-139 (GFTAALGGMVSLWSLAVIAF). Topologically, residues 140–158 (ERWLVICKPLGNFVFKSEH) are cytoplasmic. Residues 159-182 (ALLCCALTWVCGLCASVPPLVGWS) form a helical membrane-spanning segment. The Extracellular segment spans residues 183–208 (RYIPEGMQCSCGPDWYTTGNKFNNES). N206 carries N-linked (GlcNAc...) asparagine glycosylation. A helical transmembrane segment spans residues 209–236 (FVMFLFCFCFAVPFSIIVFCYSQLLFTL). Topologically, residues 237–258 (KMAAKAQADSASTQKAEKEVTR) are cytoplasmic. Residues 259-282 (MVVVMVVAFLVCYVPYASFALWVI) traverse the membrane as a helical segment. Over 283–290 (NNRGQTFD) the chain is Extracellular. The chain crosses the membrane as a helical span at residues 291 to 315 (LRLATIPSCVSKASTVYNPVIYVLL). An N6-(retinylidene)lysine modification is found at K302. The Cytoplasmic portion of the chain corresponds to 316–352 (NKQFRLCMKKMLGMSADEDEESSTSQSTTEVSKVGPS). The segment at 332–352 (DEDEESSTSQSTTEVSKVGPS) is disordered.

This sequence belongs to the G-protein coupled receptor 1 family. Opsin subfamily. Post-translationally, phosphorylated on some or all of the serine and threonine residues present in the C-terminal region. In terms of tissue distribution, the color pigments are found in the cone photoreceptor cells.

It localises to the membrane. In terms of biological role, visual pigments are the light-absorbing molecules that mediate vision. They consist of an apoprotein, opsin, covalently linked to cis-retinal. This Oryzias latipes (Japanese rice fish) protein is Blue-sensitive opsin.